The following is a 364-amino-acid chain: Aspartate aminotransferase (364 aa).

Glycine 23, tryptophan 99, and asparagine 143 together coordinate L-aspartate. The residue at position 200 (lysine 200) is an N6-(pyridoxal phosphate)lysine. Arginine 320 is an L-aspartate binding site.

It belongs to the class-I pyridoxal-phosphate-dependent aminotransferase family. As to quaternary structure, homodimer. It depends on pyridoxal 5'-phosphate as a cofactor.

Its subcellular location is the cytoplasm. It carries out the reaction L-aspartate + 2-oxoglutarate = oxaloacetate + L-glutamate. This is Aspartate aminotransferase (aspC) from Thermococcus kodakarensis (strain ATCC BAA-918 / JCM 12380 / KOD1) (Pyrococcus kodakaraensis (strain KOD1)).